The following is a 355-amino-acid chain: Methylthioribose-1-phosphate isomerase (355 aa).

Residues 47-49 (RGA), Arg-90, and Gln-197 each bind substrate. Asp-238 acts as the Proton donor in catalysis. 248–249 (NK) provides a ligand contact to substrate.

Belongs to the eIF-2B alpha/beta/delta subunits family. MtnA subfamily.

The enzyme catalyses 5-(methylsulfanyl)-alpha-D-ribose 1-phosphate = 5-(methylsulfanyl)-D-ribulose 1-phosphate. It functions in the pathway amino-acid biosynthesis; L-methionine biosynthesis via salvage pathway; L-methionine from S-methyl-5-thio-alpha-D-ribose 1-phosphate: step 1/6. In terms of biological role, catalyzes the interconversion of methylthioribose-1-phosphate (MTR-1-P) into methylthioribulose-1-phosphate (MTRu-1-P). The polypeptide is Methylthioribose-1-phosphate isomerase (Herpetosiphon aurantiacus (strain ATCC 23779 / DSM 785 / 114-95)).